Here is a 246-residue protein sequence, read N- to C-terminus: Carboxy-S-adenosyl-L-methionine synthase (246 aa).

S-adenosyl-L-methionine-binding positions include Y39, 64–66 (GCS), 89–90 (DN), 121–122 (DI), N136, and R203.

It belongs to the class I-like SAM-binding methyltransferase superfamily. Cx-SAM synthase family. Homodimer.

It catalyses the reaction prephenate + S-adenosyl-L-methionine = carboxy-S-adenosyl-L-methionine + 3-phenylpyruvate + H2O. Functionally, catalyzes the conversion of S-adenosyl-L-methionine (SAM) to carboxy-S-adenosyl-L-methionine (Cx-SAM). The sequence is that of Carboxy-S-adenosyl-L-methionine synthase from Pseudomonas aeruginosa (strain UCBPP-PA14).